Consider the following 307-residue polypeptide: N-acetylmuramic acid 6-phosphate etherase 2 (307 aa).

Positions 62 to 225 constitute an SIS domain; that stretch reads ITAAFKQGGR…TTASMIRLGK (164 aa). E90 (proton donor) is an active-site residue. E121 is a catalytic residue.

The protein belongs to the GCKR-like family. MurNAc-6-P etherase subfamily. In terms of assembly, homodimer.

The catalysed reaction is N-acetyl-D-muramate 6-phosphate + H2O = N-acetyl-D-glucosamine 6-phosphate + (R)-lactate. The protein operates within amino-sugar metabolism; 1,6-anhydro-N-acetylmuramate degradation. Its pathway is amino-sugar metabolism; N-acetylmuramate degradation. It participates in cell wall biogenesis; peptidoglycan recycling. In terms of biological role, specifically catalyzes the cleavage of the D-lactyl ether substituent of MurNAc 6-phosphate, producing GlcNAc 6-phosphate and D-lactate. Together with AnmK, is also required for the utilization of anhydro-N-acetylmuramic acid (anhMurNAc) either imported from the medium or derived from its own cell wall murein, and thus plays a role in cell wall recycling. The polypeptide is N-acetylmuramic acid 6-phosphate etherase 2 (Vibrio cholerae serotype O1 (strain ATCC 39315 / El Tor Inaba N16961)).